The primary structure comprises 91 residues: DNA-directed RNA polymerase subunit omega (91 aa).

This sequence belongs to the RNA polymerase subunit omega family. The RNAP catalytic core consists of 2 alpha, 1 beta, 1 beta' and 1 omega subunit. When a sigma factor is associated with the core the holoenzyme is formed, which can initiate transcription.

It catalyses the reaction RNA(n) + a ribonucleoside 5'-triphosphate = RNA(n+1) + diphosphate. In terms of biological role, promotes RNA polymerase assembly. Latches the N- and C-terminal regions of the beta' subunit thereby facilitating its interaction with the beta and alpha subunits. The sequence is that of DNA-directed RNA polymerase subunit omega from Photorhabdus laumondii subsp. laumondii (strain DSM 15139 / CIP 105565 / TT01) (Photorhabdus luminescens subsp. laumondii).